The following is a 191-amino-acid chain: ECF RNA polymerase sigma-E factor (191 aa).

Residues 1–153 (MSEQLTDQVL…MAITLRELDG (153 aa)) form a binds RNAP core region. The interval 25–92 (LVVRYQHKVA…KNYLVAQGRR (68 aa)) is sigma-70 factor domain-2. Positions 48-61 (DVVQESFIKAYRAL) match the Polymerase core binding motif. Positions 129 to 180 (QIVFRTIESLPEDLRMAITLRELDGLSYEEIAAIMDCPVGTVRSRIFRAREA) are sigma-70 factor domain-4. The H-T-H motif DNA-binding region spans 156-175 (YEEIAAIMDCPVGTVRSRIF).

It belongs to the sigma-70 factor family. ECF subfamily. As to quaternary structure, interacts transiently with the RNAP catalytic core formed by RpoA, RpoB, RpoC and RpoZ (2 alpha, 1 beta, 1 beta' and 1 omega subunit) to form the RNAP holoenzyme that can initiate transcription. Interacts 1:1 with anti-sigma-E factor RseA which prevents binding to RNAP catalytic core.

The protein localises to the cytoplasm. With respect to regulation, ECF sigma-E is held in an inactive form by its cognate anti-sigma factor (RseA) until released by regulated intramembrane proteolysis (RIP). RIP occurs when an extracytoplasmic signal (periplasmic, acid or heat stress) triggers a concerted proteolytic cascade to transmit information and elicit cellular responses. In S.typhimurium there are 2 cascades, the heat shock response which depends on DegS and RseP, and acid response which depends only on RseP. The anti-sigma factor RseA is an inner membrane protein, binding sigma-E in the cytoplasm and RseB in the periplasm. RseA is first cut extracytoplasmically (site-1 protease, S1P, by DegS), then within the membrane itself (site-2 protease, S2P, by RseP), while cytoplasmic proteases (predominantly ClpX-ClpP) finish degrading the regulatory protein, liberating sigma-E. Degradation of RseA requires 2 signals to activate DegS; an outer membrane protein (OMP) signal activates DegS, while an LPS signal causes release of RseB from RseA, freeing RseA to be cleaved. OMP stress can be abrogated by overexpression of the sRNA rybB. Sigma factors are initiation factors that promote the attachment of RNA polymerase (RNAP) to specific initiation sites and are then released. Extracytoplasmic function (ECF) sigma-E controls the envelope stress response, responding to periplasmic protein stress, increased levels of periplasmic lipopolysaccharide (LPS) as well as acid stress, heat shock and oxidative stress; it controls protein processing in the extracytoplasmic compartment. The sequence is that of ECF RNA polymerase sigma-E factor (rpoE) from Salmonella typhimurium (strain 14028s / SGSC 2262).